The primary structure comprises 352 residues: Quinolinate synthase (352 aa).

Residues His-48 and Ser-69 each contribute to the iminosuccinate site. Residue Cys-114 coordinates [4Fe-4S] cluster. Iminosuccinate contacts are provided by residues 140–142 and Ser-157; that span reads YAN. Cys-201 provides a ligand contact to [4Fe-4S] cluster. Residues 227-229 and Thr-244 each bind iminosuccinate; that span reads HPE. A [4Fe-4S] cluster-binding site is contributed by Cys-298.

The protein belongs to the quinolinate synthase family. Type 1 subfamily. [4Fe-4S] cluster is required as a cofactor.

It localises to the cytoplasm. It carries out the reaction iminosuccinate + dihydroxyacetone phosphate = quinolinate + phosphate + 2 H2O + H(+). It participates in cofactor biosynthesis; NAD(+) biosynthesis; quinolinate from iminoaspartate: step 1/1. Functionally, catalyzes the condensation of iminoaspartate with dihydroxyacetone phosphate to form quinolinate. The polypeptide is Quinolinate synthase (Pseudomonas putida (strain ATCC 700007 / DSM 6899 / JCM 31910 / BCRC 17059 / LMG 24140 / F1)).